A 336-amino-acid polypeptide reads, in one-letter code: Holliday junction branch migration complex subunit RuvB (336 aa).

Positions 4–185 (MDERLLSGES…FGVLSRLEYY (182 aa)) are large ATPase domain (RuvB-L). Residues Leu24, Arg25, Gly66, Lys69, Thr70, Thr71, 132-134 (EDF), Arg175, Tyr185, and Arg222 each bind ATP. Mg(2+) is bound at residue Thr70. Positions 186–256 (TVDQLSAIVE…ITQMALELLQ (71 aa)) are small ATPAse domain (RuvB-S). A head domain (RuvB-H) region spans residues 259–336 (KLGLDHIDHK…EHFGMEMPKV (78 aa)). Positions 314 and 319 each coordinate DNA.

This sequence belongs to the RuvB family. In terms of assembly, homohexamer. Forms an RuvA(8)-RuvB(12)-Holliday junction (HJ) complex. HJ DNA is sandwiched between 2 RuvA tetramers; dsDNA enters through RuvA and exits via RuvB. An RuvB hexamer assembles on each DNA strand where it exits the tetramer. Each RuvB hexamer is contacted by two RuvA subunits (via domain III) on 2 adjacent RuvB subunits; this complex drives branch migration. In the full resolvosome a probable DNA-RuvA(4)-RuvB(12)-RuvC(2) complex forms which resolves the HJ.

Its subcellular location is the cytoplasm. The catalysed reaction is ATP + H2O = ADP + phosphate + H(+). The RuvA-RuvB-RuvC complex processes Holliday junction (HJ) DNA during genetic recombination and DNA repair, while the RuvA-RuvB complex plays an important role in the rescue of blocked DNA replication forks via replication fork reversal (RFR). RuvA specifically binds to HJ cruciform DNA, conferring on it an open structure. The RuvB hexamer acts as an ATP-dependent pump, pulling dsDNA into and through the RuvAB complex. RuvB forms 2 homohexamers on either side of HJ DNA bound by 1 or 2 RuvA tetramers; 4 subunits per hexamer contact DNA at a time. Coordinated motions by a converter formed by DNA-disengaged RuvB subunits stimulates ATP hydrolysis and nucleotide exchange. Immobilization of the converter enables RuvB to convert the ATP-contained energy into a lever motion, pulling 2 nucleotides of DNA out of the RuvA tetramer per ATP hydrolyzed, thus driving DNA branch migration. The RuvB motors rotate together with the DNA substrate, which together with the progressing nucleotide cycle form the mechanistic basis for DNA recombination by continuous HJ branch migration. Branch migration allows RuvC to scan DNA until it finds its consensus sequence, where it cleaves and resolves cruciform DNA. This chain is Holliday junction branch migration complex subunit RuvB, found in Bacillus cereus (strain ZK / E33L).